Reading from the N-terminus, the 362-residue chain is Microfibril-associated glycoprotein 3 (362 aa).

The first 18 residues, 1–18, serve as a signal peptide directing secretion; that stretch reads MKLHCCLFTLVASIIVPA. At 19–147 the chain is on the extracellular side; the sequence is AFVLEDVDFD…LRVIFTSGDM (129 aa). N-linked (GlcNAc...) asparagine glycans are attached at residues asparagine 36, asparagine 41, and asparagine 110. The Ig-like C2-type domain maps to 45-137; it reads PSSFELSASS…SPIRASYSVT (93 aa). An intrachain disulfide couples cysteine 73 to cysteine 124. A helical membrane pass occupies residues 148-170; that stretch reads SVYYMIVCLIAFTITLILNVTRL. Residues 171 to 362 lie on the Cytoplasmic side of the membrane; it reads CMMSSHLRKT…KDGAYENCQL (192 aa). Disordered regions lie at residues 285–306 and 323–350; these read VINP…GSLN and ETKS…ESNC. Residues 323-337 show a composition bias toward polar residues; sequence ETKSIDTESQGSSHF.

In terms of processing, glycosylated.

It localises to the cell membrane. In terms of biological role, component of the elastin-associated microfibrils. The protein is Microfibril-associated glycoprotein 3 (MFAP3) of Homo sapiens (Human).